Here is a 701-residue protein sequence, read N- to C-terminus: F-box/LRR-repeat protein 17 (701 aa).

Disordered regions lie at residues 73–93 (SAGL…RDGA), 227–250 (GGGG…CQAP), and 279–321 (VRAG…IPDI). Residues 81-90 (PLSPPPPPPR) are compositionally biased toward pro residues. The segment covering 227 to 236 (GGGGPAGGGA) has biased composition (gly residues). The segment covering 285 to 294 (APSSAQQQPE) has biased composition (polar residues). The region spanning 318–365 (IPDINQLPPSILLKIFSNLSLNERCLSASLVCKYWRDLCLDFQFWKQL) is the F-box domain.

Belongs to the FBXL17 family. In terms of assembly, part of the SCF (SKP1-CUL1-F-box) E3 ubiquitin-protein ligase complex SCF(FBXL17) composed of CUL1, SKP1, RBX1 and FBXL17. Interacts with BTB domain-containing proteins such as KLHL12, BCL6 and BACH1; specifically recognizes and binds a conserved degron of non-consecutive residues present at the interface of BTB dimers of aberrant composition. Interacts with SUFU. Interacts with PRMT1.

It is found in the cytoplasm. Its subcellular location is the nucleus. Substrate-recognition component of the SCF(FBXL17) E3 ubiquitin ligase complex, a key component of a quality control pathway required to ensure functional dimerization of BTB domain-containing proteins (dimerization quality control, DQC). FBXL17 specifically recognizes and binds a conserved degron of non-consecutive residues present at the interface of BTB dimers of aberrant composition: aberrant BTB dimer are then ubiquitinated by the SCF(FBXL17) complex and degraded by the proteasome. The ability of the SCF(FBXL17) complex to eliminate compromised BTB dimers is required for the differentiation and survival of neural crest and neuronal cells. The SCF(FBXL17) complex mediates ubiquitination and degradation of BACH1. The SCF(FBXL17) complex is also involved in the regulation of the hedgehog/smoothened (Hh) signaling pathway by mediating the ubiquitination and degradation of SUFU, allowing the release of GLI1 from SUFU for proper Hh signal transduction. The SCF(FBXL17) complex mediates ubiquitination and degradation of PRMT1. This chain is F-box/LRR-repeat protein 17, found in Mus musculus (Mouse).